A 665-amino-acid polypeptide reads, in one-letter code: Pre-mRNA-processing factor 39 (665 aa).

The span at 1–11 (MQNSHMEEYRN) shows a compositional bias: basic and acidic residues. Residues 1–28 (MQNSHMEEYRNSDNGSTGNSSEVAVVEH) are disordered. The segment covering 12–22 (SDNGSTGNSSE) has biased composition (polar residues). Phosphoserine is present on serine 44. HAT repeat units lie at residues 107-139 (NHLMAARKAFDKFFVHYPYCYGYWKKYADLEKR), 141-173 (DNIKQSDEVYRRGLQAIPLSVDLWIHYINFLKE), 181-216 (ETNTTIRGTFEHAVLAAGTDFRSDKLWEMYINWENE), 218-251 (GNLREVTAVYDRILGIPTQLYSHHFQRFKEHVQN), 331-363 (FEEGIKRPYFHVKPLEKAQPKKNWKEYLEFEIE), 365-397 (GTHERVVVLFERCVISCALYEEFWIKYAKYMEN), and 402-434 (GVRHVFSRACTVHLPKKPMAHMLWAAFEEQQGN). Basic and acidic residues predominate over residues 599 to 622 (QDTLKRKAENGSEEPEEKKAHTED). Positions 599-625 (QDTLKRKAENGSEEPEEKKAHTEDLSS) are disordered.

It belongs to the PRP39 family.

Its subcellular location is the nucleus. In terms of biological role, involved in pre-mRNA splicing. This is Pre-mRNA-processing factor 39 (Prpf39) from Mus musculus (Mouse).